Consider the following 325-residue polypeptide: MEVVVARQPKAKKQINLFYCSECEELALKVAASSDTIHLQSINWRSFDDGFPNLFINNAHDIRGQHVAFLASFSSPSVIFEQISVIFALPKLFIASFTLVLPFFPTGSFERVEEEGDVATAFTLARILSMIPKSRGGPTSVVIYDIHALQERFYFGDDVLPCFETGIPLLLQRLRQLPDADNITIAFPDDGAWKRFHKLLLNFPMVVCAKVREGDKRIVRIKEGNPEGRHVVIVDDLVQSGGTLRECQKVLAAHGAAKVSAYVTHAVFPKQSYERFTHTNSAGSADKFAYFWITDSCPQTVKAINQQPPFEVLSLAGSIADALQI.

Asp145 and His147 together coordinate Mg(2+). The binding of phosphoribosylpyrophosphate stretch occupies residues 228 to 243 (GRHVVIVDDLVQSGGT).

The protein belongs to the ribose-phosphate pyrophosphokinase family. Mg(2+) is required as a cofactor.

The catalysed reaction is D-ribose 5-phosphate + ATP = 5-phospho-alpha-D-ribose 1-diphosphate + AMP + H(+). The sequence is that of Ribose-phosphate pyrophosphokinase 4 from Oryza sativa subsp. japonica (Rice).